Reading from the N-terminus, the 194-residue chain is HTH-type transcriptional regulator BetI (194 aa).

Residues 8 to 68 form the HTH tetR-type domain; it reads EIRRAQLIDA…ATMRHVLRDL (61 aa). A DNA-binding region (H-T-H motif) is located at residues 31-50; it reads TLASVAQRANISTGIVSHYF.

It participates in amine and polyamine biosynthesis; betaine biosynthesis via choline pathway [regulation]. In terms of biological role, repressor involved in the biosynthesis of the osmoprotectant glycine betaine. It represses transcription of the choline transporter BetT and the genes of BetAB involved in the synthesis of glycine betaine. The chain is HTH-type transcriptional regulator BetI from Burkholderia cenocepacia (strain HI2424).